The primary structure comprises 892 residues: Alanine--tRNA ligase (892 aa).

Positions 594, 598, 702, and 706 each coordinate Zn(2+).

This sequence belongs to the class-II aminoacyl-tRNA synthetase family. The cofactor is Zn(2+).

Its subcellular location is the cytoplasm. The catalysed reaction is tRNA(Ala) + L-alanine + ATP = L-alanyl-tRNA(Ala) + AMP + diphosphate. In terms of biological role, catalyzes the attachment of alanine to tRNA(Ala) in a two-step reaction: alanine is first activated by ATP to form Ala-AMP and then transferred to the acceptor end of tRNA(Ala). Also edits incorrectly charged Ser-tRNA(Ala) and Gly-tRNA(Ala) via its editing domain. This chain is Alanine--tRNA ligase, found in Pyrobaculum aerophilum (strain ATCC 51768 / DSM 7523 / JCM 9630 / CIP 104966 / NBRC 100827 / IM2).